The sequence spans 1836 residues: Druantia protein DruE (1836 aa).

One can recognise a Helicase ATP-binding domain in the interval 108–405 (SFLGEDASDL…FAQDLTGLSP (298 aa)). An ATP-binding site is contributed by 121–128 (TGTGSGKT). Residues 347–350 (DEAH) carry the DEAH box motif. Residues 1014 to 1199 (DCTALMPFAL…EVKVNNPKIA (186 aa)) form the Helicase C-terminal domain.

The protein localises to the cytoplasm. Functionally, component of antiviral defense system Druantia type I, composed of DruA, DruB, DruC, DruD and DruE. Expression of Druantia in E.coli (strain MG1655) confers resistance to phage lambda, SECphi18, SECphi27 and T4. This protein is probably a helicase. This is Druantia protein DruE from Escherichia coli (strain UMEA 4076-1).